Here is a 175-residue protein sequence, read N- to C-terminus: Large ribosomal subunit protein uL10 (175 aa).

It belongs to the universal ribosomal protein uL10 family. Part of the ribosomal stalk of the 50S ribosomal subunit. The N-terminus interacts with L11 and the large rRNA to form the base of the stalk. The C-terminus forms an elongated spine to which L12 dimers bind in a sequential fashion forming a multimeric L10(L12)X complex.

Functionally, forms part of the ribosomal stalk, playing a central role in the interaction of the ribosome with GTP-bound translation factors. In Xylella fastidiosa (strain M23), this protein is Large ribosomal subunit protein uL10.